The primary structure comprises 398 residues: Isopenicillin N epimerase (398 aa).

Lys-219 is modified (N6-(pyridoxal phosphate)lysine). Positions 243 to 264 (PQVSWGYRPDGENPSDERNRFG) are disordered. Over residues 251–264 (PDGENPSDERNRFG) the composition is skewed to basic and acidic residues.

This sequence belongs to the class-V pyridoxal-phosphate-dependent aminotransferase family. Pyridoxal 5'-phosphate serves as cofactor.

It carries out the reaction isopenicillin N = penicillin N. It participates in antibiotic biosynthesis; cephalosporin C biosynthesis. Its function is as follows. Catalyzes the reversible isomerization between isopenicillin N and penicillin N. The sequence is that of Isopenicillin N epimerase (cefD) from Amycolatopsis lactamdurans (Nocardia lactamdurans).